Here is a 193-residue protein sequence, read N- to C-terminus: Phosphatidylglycerophosphatase and protein-tyrosine phosphatase 1 (193 aa).

A mitochondrion-targeting transit peptide spans 1–31; the sequence is MAASAWLEAGLARVLFYPTLLYTVFRGRVRG. In terms of domain architecture, Tyrosine-protein phosphatase spans 37 to 188; sequence WYHRIDHTVL…LKEFHKEITA (152 aa). Lys85 is modified (N6-succinyllysine). The Phosphocysteine intermediate role is filled by Cys132.

It belongs to the protein-tyrosine phosphatase family. Non-receptor class dual specificity subfamily. As to quaternary structure, interacts with STYXL1; the interaction inhibits PTPMT1 catalytic activity. In terms of tissue distribution, predominantly expressed in testis. Expressed at lower level in heart, brain, spleen, lung, liver, skeletal muscle, kidney, bone marrow, eye, lymph node, smooth muscle, prostate, thymus, stomach and uterus.

The protein localises to the mitochondrion inner membrane. The catalysed reaction is a 1,2-diacyl-sn-glycero-3-phospho-(1'-sn-glycero-3'-phosphate) + H2O = a 1,2-diacyl-sn-glycero-3-phospho-(1'-sn-glycerol) + phosphate. The enzyme catalyses O-phospho-L-tyrosyl-[protein] + H2O = L-tyrosyl-[protein] + phosphate. It carries out the reaction O-phospho-L-seryl-[protein] + H2O = L-seryl-[protein] + phosphate. It catalyses the reaction O-phospho-L-threonyl-[protein] + H2O = L-threonyl-[protein] + phosphate. The catalysed reaction is 1,2-di-(9Z-octadecenoyl)-sn-glycero-3-phospho-(1'-sn-glycerol-3'-phosphate) + H2O = 1,2-di-(9Z-octadecenoyl)-sn-glycero-3-phospho-(1'-sn-glycerol) + phosphate. The enzyme catalyses 1,2-dioctanoyl-sn-glycero-3-phospho-(1D-myo-inositol-5-phosphate) + H2O = 1,2-dioctanoyl-sn-glycero-3-phospho-(1D-myo-inositol) + phosphate. It carries out the reaction a 1-acyl-2-hexanoyl-sn-glycero-3-phospho-(1D-myo-inositol-5-phosphate) + H2O = a 1-acyl-2-hexanoyl-sn-glycero-3-phospho-(1D-myo-inositol) + phosphate. It catalyses the reaction 1,2-dibutyryl-sn-glycero-3-phospho-(1D-myo-inositol-5-phosphate) + H2O = 1,2-dibutyryl-sn-glycero-3-phospho-(1D-myo-inositol) + phosphate. The protein operates within phospholipid metabolism; phosphatidylglycerol biosynthesis; phosphatidylglycerol from CDP-diacylglycerol: step 2/2. In terms of biological role, lipid phosphatase which dephosphorylates phosphatidylglycerophosphate (PGP) to phosphatidylglycerol (PG). PGP is an essential intermediate in the biosynthetic pathway of cardiolipin, a mitochondrial-specific phospholipid regulating the membrane integrity and activities of the organelle. Has also been shown to display phosphatase activity toward phosphoprotein substrates, specifically mediates dephosphorylation of mitochondrial proteins, thereby playing an essential role in ATP production. Has probably a preference for proteins phosphorylated on Ser and/or Thr residues compared to proteins phosphorylated on Tyr residues. Probably involved in regulation of insulin secretion in pancreatic beta cells. May prevent intrinsic apoptosis, probably by regulating mitochondrial membrane integrity. This is Phosphatidylglycerophosphatase and protein-tyrosine phosphatase 1 from Mus musculus (Mouse).